The chain runs to 490 residues: Glutamate--tRNA ligase (490 aa).

The short motif at 13-23 (PSPTGTPHVGL) is the 'HIGH' region element. Residues 257–261 (KLSKR) carry the 'KMSKS' region motif. Lysine 260 provides a ligand contact to ATP.

The protein belongs to the class-I aminoacyl-tRNA synthetase family. Glutamate--tRNA ligase type 1 subfamily. As to quaternary structure, monomer.

The protein resides in the cytoplasm. It catalyses the reaction tRNA(Glu) + L-glutamate + ATP = L-glutamyl-tRNA(Glu) + AMP + diphosphate. Catalyzes the attachment of glutamate to tRNA(Glu) in a two-step reaction: glutamate is first activated by ATP to form Glu-AMP and then transferred to the acceptor end of tRNA(Glu). The chain is Glutamate--tRNA ligase from Mycobacterium bovis (strain BCG / Pasteur 1173P2).